Reading from the N-terminus, the 336-residue chain is MGNCLHTAELSPSTENSSQLDFEDAWNSSYDVNYSFPDVDYDANLEAAAPCHSCNLLDDSALPFFILTSVLGILASSTVLFILFRPLFRWQLCPGWPVLAQLAVGSALFSIVVPILAPGLGSTHSSALCSLGYCVWYGSAFAQALLLGCHASLGHRLGAGQVPGLTLGLTVGIWGVAALLTLPVTLASGASGGLCTPIHSTELKALQATHTVACLAIFVLLPLGLFGAKGLKKALGMGPGPWMNILWAWFIFWWPHGVVLGLDFLVRSKLLLLSTCLAQQALDLLLNLAEALAILHCVATPLILALFYHQATRTLLPSLPLPEGWSSHLDTLGSKS.

Over 1–63 the chain is Extracellular; that stretch reads MGNCLHTAEL…CNLLDDSALP (63 aa). N-linked (GlcNAc...) asparagine glycosylation is found at Asn16, Asn27, and Asn33. 2 cysteine pairs are disulfide-bonded: Cys51-Cys276 and Cys129-Cys195. The helical transmembrane segment at 64-84 threads the bilayer; that stretch reads FFILTSVLGILASSTVLFILF. At 85 to 95 the chain is on the cytoplasmic side; sequence RPLFRWQLCPG. Residues 96–116 traverse the membrane as a helical segment; sequence WPVLAQLAVGSALFSIVVPIL. The Extracellular segment spans residues 117 to 129; the sequence is APGLGSTHSSALC. A helical transmembrane segment spans residues 130–153; that stretch reads SLGYCVWYGSAFAQALLLGCHASL. Residues 154-166 lie on the Cytoplasmic side of the membrane; the sequence is GHRLGAGQVPGLT. A helical transmembrane segment spans residues 167-187; sequence LGLTVGIWGVAALLTLPVTLA. The Extracellular portion of the chain corresponds to 188–207; that stretch reads SGASGGLCTPIHSTELKALQ. Residues 208-228 form a helical membrane-spanning segment; the sequence is ATHTVACLAIFVLLPLGLFGA. Topologically, residues 229–244 are cytoplasmic; sequence KGLKKALGMGPGPWMN. Residues 245–265 traverse the membrane as a helical segment; it reads ILWAWFIFWWPHGVVLGLDFL. At 266 to 287 the chain is on the extracellular side; the sequence is VRSKLLLLSTCLAQQALDLLLN. A helical transmembrane segment spans residues 288-308; it reads LAEALAILHCVATPLILALFY. Residues 309–336 are Cytoplasmic-facing; the sequence is HQATRTLLPSLPLPEGWSSHLDTLGSKS.

It belongs to the G-protein coupled receptor 1 family. Atypical chemokine receptor subfamily.

It is found in the early endosome. The protein localises to the recycling endosome. Its subcellular location is the membrane. Functionally, atypical chemokine receptor that controls chemokine levels and localization via high-affinity chemokine binding that is uncoupled from classic ligand-driven signal transduction cascades, resulting instead in chemokine sequestration, degradation, or transcytosis. Also known as interceptor (internalizing receptor) or chemokine-scavenging receptor or chemokine decoy receptor. Has a promiscuous chemokine-binding profile, interacting with inflammatory chemokines of both the CXC and the CC subfamilies but not with homeostatic chemokines. Acts as a receptor for chemokines including CCL2, CCL5, CCL7, CCL11, CCL13, CCL14, CCL17, CXCL5, CXCL6, IL8/CXCL8, CXCL11, GRO, RANTES, MCP-1 and TARC. May regulate chemokine bioavailability and, consequently, leukocyte recruitment through two distinct mechanisms: when expressed in endothelial cells, it sustains the abluminal to luminal transcytosis of tissue-derived chemokines and their subsequent presentation to circulating leukocytes; when expressed in erythrocytes, serves as blood reservoir of cognate chemokines but also as a chemokine sink, buffering potential surges in plasma chemokine levels. In Gorilla gorilla gorilla (Western lowland gorilla), this protein is Atypical chemokine receptor 1 (ACKR1).